We begin with the raw amino-acid sequence, 153 residues long: Putative OPA3-like protein CG43998 (153 aa).

Positions 101-153 (ELSKTYTKTKKQNQEIEDQKRVLDECVDCISADVERNQREINWIKAALKNVEK) form a coiled coil.

The protein belongs to the OPA3 family.

The protein is Putative OPA3-like protein CG43998 of Drosophila melanogaster (Fruit fly).